The primary structure comprises 255 residues: Indole-3-glycerol phosphate synthase (255 aa).

This sequence belongs to the TrpC family.

The enzyme catalyses 1-(2-carboxyphenylamino)-1-deoxy-D-ribulose 5-phosphate + H(+) = (1S,2R)-1-C-(indol-3-yl)glycerol 3-phosphate + CO2 + H2O. The protein operates within amino-acid biosynthesis; L-tryptophan biosynthesis; L-tryptophan from chorismate: step 4/5. The sequence is that of Indole-3-glycerol phosphate synthase from Streptococcus thermophilus (strain ATCC BAA-491 / LMD-9).